Reading from the N-terminus, the 217-residue chain is Large ribosomal subunit protein uL4 (217 aa).

Positions 46 to 103 are disordered; the sequence is KRQGTHATKTRGMVSGGGRKPFRQKGTGRARQGSIRAPHFTGGGTVHGPQPRDYSQRT.

This sequence belongs to the universal ribosomal protein uL4 family. In terms of assembly, part of the 50S ribosomal subunit.

One of the primary rRNA binding proteins, this protein initially binds near the 5'-end of the 23S rRNA. It is important during the early stages of 50S assembly. It makes multiple contacts with different domains of the 23S rRNA in the assembled 50S subunit and ribosome. Its function is as follows. Forms part of the polypeptide exit tunnel. This is Large ribosomal subunit protein uL4 from Corynebacterium jeikeium (strain K411).